The primary structure comprises 428 residues: Maltoporin (428 aa).

An N-terminal signal peptide occupies residues 1–24 (MTTLRKLPIALAVAAGVLSTQAMA).

The protein belongs to the porin LamB (TC 1.B.3) family. As to quaternary structure, homotrimer formed of three 18-stranded antiparallel beta-barrels, containing three independent channels.

It is found in the cell outer membrane. The catalysed reaction is beta-maltose(in) = beta-maltose(out). Its function is as follows. Involved in the transport of maltose and maltodextrins. The protein is Maltoporin of Yersinia enterocolitica serotype O:8 / biotype 1B (strain NCTC 13174 / 8081).